A 404-amino-acid chain; its full sequence is L-cysteine:1D-myo-inositol 2-amino-2-deoxy-alpha-D-glucopyranoside ligase (404 aa).

The segment at 1–20 is disordered; it reads MRTWPTPDVPPLPRTGAPAP. Zn(2+) is bound at residue C45. L-cysteinyl-5'-AMP is bound by residues 45–48, T60, and 83–85; these read CGIT and NVT. The 'HIGH' region motif lies at 47 to 57; sequence ITPYDATHLGH. Positions 185–190 match the 'ERGGDP' region motif; sequence ERGGDP. Positions 185-216 are disordered; sequence ERGGDPDRPGKKHPLDPALWRGEQPGEPSWDG. Over residues 186–199 the composition is skewed to basic and acidic residues; it reads RGGDPDRPGKKHPL. Position 226 (W226) interacts with L-cysteinyl-5'-AMP. A Zn(2+)-binding site is contributed by C230. 248–250 lines the L-cysteinyl-5'-AMP pocket; the sequence is GAD. H255 provides a ligand contact to Zn(2+). Residue L280 coordinates L-cysteinyl-5'-AMP. The 'KMSKS' region motif lies at 286 to 290; that stretch reads KMSKS.

The protein belongs to the class-I aminoacyl-tRNA synthetase family. MshC subfamily. In terms of assembly, monomer. It depends on Zn(2+) as a cofactor.

It catalyses the reaction 1D-myo-inositol 2-amino-2-deoxy-alpha-D-glucopyranoside + L-cysteine + ATP = 1D-myo-inositol 2-(L-cysteinylamino)-2-deoxy-alpha-D-glucopyranoside + AMP + diphosphate + H(+). Functionally, catalyzes the ATP-dependent condensation of GlcN-Ins and L-cysteine to form L-Cys-GlcN-Ins. In Xylanimonas cellulosilytica (strain DSM 15894 / JCM 12276 / CECT 5975 / KCTC 9989 / LMG 20990 / NBRC 107835 / XIL07), this protein is L-cysteine:1D-myo-inositol 2-amino-2-deoxy-alpha-D-glucopyranoside ligase.